Consider the following 304-residue polypeptide: Recombination-associated protein RdgC (304 aa).

This sequence belongs to the RdgC family.

The protein localises to the cytoplasm. It localises to the nucleoid. Functionally, may be involved in recombination. This is Recombination-associated protein RdgC from Shewanella sp. (strain MR-4).